The chain runs to 235 residues: MGKMGGSRHLKSLAAPGYYPIAKRERVWVVKPSPGPHAIDEGIPLLLIVRDMLKLATTAREARRIISMKKILVDGKPRYDYKFQVGLMDVISIPEIGVNYRMVPDPHRFLRLIEIPQSESKMKLVKVIGKRTIRGGRIQLTSHDGRNFLLDGRDVKPGDSLLIELPSQSVIDHLRFDTGSSVLVTRGRMAGRIGRVEGIGTIIEMRDLENPELSYRGVKENLIVVGKERPVLKLR.

Positions 43–114 (IPLLLIVRDM…DPHRFLRLIE (72 aa)) constitute an S4 RNA-binding domain.

This sequence belongs to the eukaryotic ribosomal protein eS4 family.

This Korarchaeum cryptofilum (strain OPF8) protein is Small ribosomal subunit protein eS4.